A 654-amino-acid chain; its full sequence is MICOS complex subunit MIC60-2 (654 aa).

Residues 1–12 (MRGSRNLLTQRL) constitute a mitochondrion transit peptide. The Mitochondrial matrix segment spans residues 13 to 20 (ASSRATGS). The chain crosses the membrane as a helical span at residues 21-43 (SGGLKFVGATVGAVTAGAAGVAG). The Mitochondrial intermembrane segment spans residues 44–654 (YASYDNEFRK…AALTSIRSTY (611 aa)). Residues 115–129 (LKETTEPKKIEKKPE) are compositionally biased toward basic and acidic residues. The segment at 115–140 (LKETTEPKKIEKKPENPYIGAKTPLN) is disordered.

The protein belongs to the MICOS complex subunit Mic60 family. In terms of assembly, component of the mitochondrial contact site and cristae organizing system (MICOS) complex. As to expression, expressed in the gonads and muscle cells.

It is found in the mitochondrion inner membrane. The protein resides in the cytoplasm. Sustains mitochondrial morphology probably through maintaining cristae morphology. May act as a component of the MICOS complex, a large protein complex of the mitochondria. The polypeptide is MICOS complex subunit MIC60-2 (Caenorhabditis elegans).